A 332-amino-acid chain; its full sequence is Biotin synthase (332 aa).

One can recognise a Radical SAM core domain in the interval 53–282 (HFGKKVKLNM…TKEIRISGGR (230 aa)). [4Fe-4S] cluster-binding residues include C71, C75, and C78. The [2Fe-2S] cluster site is built by C115, C147, C207, and R277.

The protein belongs to the radical SAM superfamily. Biotin synthase family. Homodimer. Requires [4Fe-4S] cluster as cofactor. [2Fe-2S] cluster serves as cofactor.

The catalysed reaction is (4R,5S)-dethiobiotin + (sulfur carrier)-SH + 2 reduced [2Fe-2S]-[ferredoxin] + 2 S-adenosyl-L-methionine = (sulfur carrier)-H + biotin + 2 5'-deoxyadenosine + 2 L-methionine + 2 oxidized [2Fe-2S]-[ferredoxin]. It participates in cofactor biosynthesis; biotin biosynthesis; biotin from 7,8-diaminononanoate: step 2/2. Catalyzes the conversion of dethiobiotin (DTB) to biotin by the insertion of a sulfur atom into dethiobiotin via a radical-based mechanism. The polypeptide is Biotin synthase (Bacillus cereus (strain AH187)).